The chain runs to 207 residues: Ras-related protein Rab7 (207 aa).

Residues 15-22 (GDSGVGKT), 63-67 (DTAGQ), and 125-128 (NKID) contribute to the GTP site. Residues Cys-205 and Cys-207 are each lipidated (S-geranylgeranyl cysteine). Residue Cys-207 is modified to Cysteine methyl ester.

This sequence belongs to the small GTPase superfamily. Rab family.

The protein localises to the cell membrane. Functionally, protein transport. Probably involved in vesicular traffic. The protein is Ras-related protein Rab7 of Prunus armeniaca (Apricot).